We begin with the raw amino-acid sequence, 235 residues long: Orotidine 5'-phosphate decarboxylase (235 aa).

Substrate is bound by residues aspartate 17, lysine 39, 66 to 75 (DLKLHDIGNT), threonine 121, arginine 182, glutamine 191, glycine 211, and arginine 212. Lysine 68 functions as the Proton donor in the catalytic mechanism.

It belongs to the OMP decarboxylase family. Type 1 subfamily. As to quaternary structure, homodimer.

The catalysed reaction is orotidine 5'-phosphate + H(+) = UMP + CO2. The protein operates within pyrimidine metabolism; UMP biosynthesis via de novo pathway; UMP from orotate: step 2/2. Its function is as follows. Catalyzes the decarboxylation of orotidine 5'-monophosphate (OMP) to uridine 5'-monophosphate (UMP). This is Orotidine 5'-phosphate decarboxylase from Rhodopseudomonas palustris (strain BisB5).